Reading from the N-terminus, the 359-residue chain is MTIFSGPRGLFACYCLVAESSESPKRCYIGFTNNPLRRIRQHNRKIAGGARKTSRYGPWRMVLFVGGFSTKVSALKFEYIWTYPTRSRYVNCISATSQKLRLACPRSISTALDVLVTLLIHPPFSLQPLYVVLLDAEGNRVKSQLEQHSVPVFVSTMEALQIEPGVRAPSDIIYAQCTSSNGTTDTTFTDVCPICQDGVSPSNVQCMQCSARFCITCAGKLFTRRNTLIPCFGKCPICKREFQWKEMLRKRAEELVAGRKSVPHKTQAVDGQSSLSQNSSYDDYDTISLLSSSSEPEKDDISRDESGTVASVQPVSSVALSDSSRSPATTSPTKPLAIDPLLSSPRPCALPSDVISITD.

The GIY-YIG domain occupies 9 to 91; that stretch reads GLFACYCLVA…TYPTRSRYVN (83 aa). The SLX1-type zinc finger occupies 192–238; the sequence is CPICQDGVSPSNVQCMQCSARFCITCAGKLFTRRNTLIPCFGKCPIC. The tract at residues 256-359 is disordered; the sequence is VAGRKSVPHK…LPSDVISITD (104 aa). Residues 269 to 281 show a composition bias toward polar residues; that stretch reads VDGQSSLSQNSSY. Basic and acidic residues predominate over residues 295 to 306; that stretch reads EPEKDDISRDES. The span at 316–326 shows a compositional bias: low complexity; the sequence is SSVALSDSSRS.

The protein belongs to the SLX1 family. As to quaternary structure, forms a heterodimer with a member of the SLX4 family. The cofactor is a divalent metal cation.

It localises to the nucleus. Catalytic subunit of a heterodimeric structure-specific endonuclease that resolves DNA secondary structures generated during DNA repair and recombination. Has endonuclease activity towards branched DNA substrates, introducing single-strand cuts in duplex DNA close to junctions with ss-DNA. The sequence is that of Structure-specific endonuclease subunit SLX1 homolog from Giardia intestinalis (strain ATCC 50803 / WB clone C6) (Giardia lamblia).